We begin with the raw amino-acid sequence, 102 residues long: Mini zinc finger protein 1 (102 aa).

Over residues Met-1–Ser-13 the composition is skewed to basic residues. The interval Met-1–Ile-34 is disordered. The span at Arg-14–Ser-32 shows a compositional bias: low complexity. The segment at Tyr-39 to Glu-88 adopts a ZF-HD dimerization-type; degenerate zinc-finger fold.

Homo- and heterodimers. Interacts with ZHD1, ZHD5, ZHD6, ZHD7, ZHD8, ZHD10 and ZHD13. As to expression, mostly expressed in roots and stems, present in siliques and seedlings, and weakly observed in petioles, leaves and flowers.

The protein resides in the cytoplasm. In terms of biological role, inhibits zinc finger homeodomain (ZHD) transcription factors, such as ZHD5, by interacting with them to prevent both their nuclear localization and their DNA-binding properties. Involved in integrating signals from multiple hormones by preventing the expression of genes involved in gibberellic acid (GA), auxin and brassinosteroid signaling and by promoting the expression of abscisic acid (ABA)-responsive genes. Regulates several development aspects, including photomorphogenesis, apical dominance, longevity, flower morphology and fertility, as well as root and stem elongation. Promotes the formation of ectopic shoot meristems on leaf margins. This Arabidopsis thaliana (Mouse-ear cress) protein is Mini zinc finger protein 1 (MIF1).